Consider the following 61-residue polypeptide: Small ribosomal subunit protein uS14 (61 aa).

Residues C24, C27, C40, and C43 each contribute to the Zn(2+) site.

This sequence belongs to the universal ribosomal protein uS14 family. Zinc-binding uS14 subfamily. In terms of assembly, part of the 30S ribosomal subunit. Contacts proteins S3 and S10. It depends on Zn(2+) as a cofactor.

Functionally, binds 16S rRNA, required for the assembly of 30S particles and may also be responsible for determining the conformation of the 16S rRNA at the A site. The polypeptide is Small ribosomal subunit protein uS14 (Nitratiruptor sp. (strain SB155-2)).